A 441-amino-acid polypeptide reads, in one-letter code: Leucine-rich repeat-containing protein 17 (441 aa).

Residues 1–18 (MRVVTIVILLCFCKAAEL) form the signal peptide. LRR repeat units lie at residues 82 to 103 (DLLHMLLARNKIRTLKNNMFSK), 106 to 127 (KLKSLDLQQNEISKIESEAFFG), and 130 to 151 (KLTTLLLQHNQIKVLTEEVFIY). The region spanning 163–214 (NPWHCTCEIETLISMLQIPRNRNLGNYAKCESPQEQKNKKLRQIKSEQLCNE) is the LRRCT 1 domain. Residues 225 to 268 (QVSGRPPVIKPEVDSTFCHNYVFPIQTLDCKRKELKKVPNNIPP) enclose the LRRNT domain. LRR repeat units lie at residues 269-290 (DIVKLDLSYNKINQLRPKEFED), 293-314 (ELKKLNLSSNGIEFIDPAAFLG), and 317-340 (HLEELDLSNNSLQNFDYGVLEDLY). An LRRCT 2 domain is found at 350–402 (NPWRCDYNIHYLYYWLKHHYNVHFNGLECKTPEEYKGWSVGKYIRSYYEECPK).

As to expression, expressed in osteoblast cell lines. Well expressed in ovary, heart, pancreas, skeletal muscle, lung, and fetal kidney and lung and only at the basal levels in the other tissues examined including adult kidney. More expressed in S-type neuroblastoma cells than in N-type neuroblastoma cells.

It localises to the secreted. Its subcellular location is the extracellular space. Its function is as follows. Involved in bone homeostasis. Acts as a negative regulator of RANKL-induced osteoclast precursor differentiation from bone marrow precursors. The sequence is that of Leucine-rich repeat-containing protein 17 (LRRC17) from Homo sapiens (Human).